A 518-amino-acid polypeptide reads, in one-letter code: Chromosomal replication initiator protein DnaA (518 aa).

The interval 1 to 73 is domain I, interacts with DnaA modulators; the sequence is MTLAEFWPLC…REELAAGRPA (73 aa). The segment at 73–180 is domain II; the sequence is AFVFKPGEGV…DAEEARYEQT (108 aa). Residues 144 to 180 form a disordered region; that stretch reads HEPRQAAGPASRPESAAVAKARTDAQRDAEEARYEQT. Residues 164–177 are compositionally biased toward basic and acidic residues; the sequence is ARTDAQRDAEEARY. A domain III, AAA+ region region spans residues 181-397; sequence NLSPDYTFDT…GAFNRVGASS (217 aa). ATP-binding residues include G225, G227, K228, and T229. A domain IV, binds dsDNA region spans residues 398 to 518; the sequence is RFMNRPVIDI…YEKLLILIQN (121 aa).

This sequence belongs to the DnaA family. As to quaternary structure, oligomerizes as a right-handed, spiral filament on DNA at oriC.

Its subcellular location is the cytoplasm. In terms of biological role, plays an essential role in the initiation and regulation of chromosomal replication. ATP-DnaA binds to the origin of replication (oriC) to initiate formation of the DNA replication initiation complex once per cell cycle. Binds the DnaA box (a 9 base pair repeat at the origin) and separates the double-stranded (ds)DNA. Forms a right-handed helical filament on oriC DNA; dsDNA binds to the exterior of the filament while single-stranded (ss)DNA is stabiized in the filament's interior. The ATP-DnaA-oriC complex binds and stabilizes one strand of the AT-rich DNA unwinding element (DUE), permitting loading of DNA polymerase. After initiation quickly degrades to an ADP-DnaA complex that is not apt for DNA replication. Binds acidic phospholipids. This chain is Chromosomal replication initiator protein DnaA, found in Neisseria gonorrhoeae (strain ATCC 700825 / FA 1090).